Here is a 113-residue protein sequence, read N- to C-terminus: Large ribosomal subunit protein bL19 (113 aa).

It belongs to the bacterial ribosomal protein bL19 family.

Its function is as follows. This protein is located at the 30S-50S ribosomal subunit interface and may play a role in the structure and function of the aminoacyl-tRNA binding site. The protein is Large ribosomal subunit protein bL19 of Corynebacterium efficiens (strain DSM 44549 / YS-314 / AJ 12310 / JCM 11189 / NBRC 100395).